The following is a 511-amino-acid chain: Fusicocca-1,10(14)-diene-8beta,16-diol C-9 hydroxylase (511 aa).

Residues 7–29 form a helical membrane-spanning segment; that stretch reads TVAALAAVFVAGTLLSRLASWIR. Residues Asn64, Asn163, and Asn343 are each glycosylated (N-linked (GlcNAc...) asparagine). Cys450 serves as a coordination point for heme.

Belongs to the cytochrome P450 family. Requires heme as cofactor.

The protein localises to the membrane. It participates in mycotoxin biosynthesis. Functionally, cytochrome P450 monooxygenase; part of the 2 gene clusters that mediate the biosynthesis of fusicoccins, diterpene glucosides that display phytohormone-like activity and function as potent activators of plasma membrane H(+)-ATPases in plants by modifying 14-3-3 proteins and cause the plant disease constriction canker. The first step in the pathway is performed by the fusicoccadiene synthase PaFS that possesses both prenyl transferase and terpene cyclase activity, converting isopentenyl diphosphate and dimethylallyl diphosphate into geranylgeranyl diphosphate (GGDP) and successively converting GGDP into fusicocca-2,10(14)-diene, a precursor for fusicoccin H. The second step is the oxidation at the C-8 position by the cytochrome P450 monooxygenase PaP450-2 to yield fusicocca-2,10(14)-diene-8-beta-ol. The cytochrome P450 monooxygenase PaP450-1 then catalyzes the hydroxylation at the C-16 position to produce fusicocca-2,10(14)-diene-8-beta,16-diol. The dioxygenase fc-dox then catalyzes the 16-oxydation of fusicocca-2,10(14)-diene-8-beta,16-diol to yield an aldehyde (8-beta-hydroxyfusicocca-1,10(14)-dien-16-al). The short-chain dehydrogenase/reductase fc-sdr catalyzes the reduction of the aldehyde to yield fusicocca-1,10(14)-diene-8-beta,16-diol. The next step is the hydroxylation at C-9 performed by the cytochrome P450 monooxygenase PaP450-3 that leads to fusicoccin H aglycon which is glycosylated to fusicoccin H by the O-glycosyltransferase PaGT. Hydroxylation at C-12 by the cytochrome P450 monooxygenase PaP450-4 leads then to the production of fusicoccin Q and is followed by methylation by the O-methyltransferase PaMT to yield fusicoccin P. Fusicoccin P is further converted to fusicoccin J via prenylation by the O-glucose prenyltransferase PaPT. Cytochrome P450 monooxygenase PaP450-5 then performs hydroxylation at C-19 to yield dideacetyl-fusicoccin A which is acetylated to 3'-O-deacetyl-fusicoccin A by the O-acetyltransferase PaAT-2. Finally, a another acetylation by the O-acetyltransferase PaAT-1 yields fusicoccin A. In Phomopsis amygdali (Fusicoccum amygdali), this protein is Fusicocca-1,10(14)-diene-8beta,16-diol C-9 hydroxylase.